A 180-amino-acid polypeptide reads, in one-letter code: MFPMVTGFMNYGQQTVRAARYIGQSLMITLSHANRLPVTIQYPYEKVITSERFRGRIHFEFDKCIACEVCVRVCPIDLPVVDWKLETNIRKKRLLNYSIDFGICIFCGNCVEYCPTNCLSMTEEYELSAYDRHELNYNQIALGRLPMSVIGDYTIRTITNSTQTEIATGKRFDSKTITNY.

4Fe-4S ferredoxin-type domains are found at residues 55-84 (GRIH…VDWK) and 95-124 (LNYS…MTEE). 8 residues coordinate [4Fe-4S] cluster: Cys-64, Cys-67, Cys-70, Cys-74, Cys-104, Cys-107, Cys-110, and Cys-114.

It belongs to the complex I 23 kDa subunit family. NDH is composed of at least 16 different subunits, 5 of which are encoded in the nucleus. The cofactor is [4Fe-4S] cluster.

It is found in the plastid. The protein resides in the chloroplast thylakoid membrane. The catalysed reaction is a plastoquinone + NADH + (n+1) H(+)(in) = a plastoquinol + NAD(+) + n H(+)(out). It carries out the reaction a plastoquinone + NADPH + (n+1) H(+)(in) = a plastoquinol + NADP(+) + n H(+)(out). Its function is as follows. NDH shuttles electrons from NAD(P)H:plastoquinone, via FMN and iron-sulfur (Fe-S) centers, to quinones in the photosynthetic chain and possibly in a chloroplast respiratory chain. The immediate electron acceptor for the enzyme in this species is believed to be plastoquinone. Couples the redox reaction to proton translocation, and thus conserves the redox energy in a proton gradient. This chain is NAD(P)H-quinone oxidoreductase subunit I, chloroplastic, found in Ranunculus macranthus (Large buttercup).